Here is a 517-residue protein sequence, read N- to C-terminus: MACGGCSCEAAVGATASEAYLEGEPVREARELVAELCRHFYAQGWVTGTGGSITVKVNDPAVPLADRLIVMSPSGVQKERMVAEDMYVMAADGKVLSAPVAKPWPNKPPKCTDCAPLFMKAYLMRGAGAVIHSHGMETCIATMLNPGAKEFRMTHMEMIKGIKGHGYRDELVIPIVENTPYEYELTDSLSEAIAAYPKATAVLVRNHGIYVWGDSWINAKTQAECYHYLLDACIKLYQLGIDWTTPEHGPINNAKRQRSILSSEIPNGCRAADSSKCVVLDIEGTTTPISFVTDVMFPYARDNVREHLTSTFDSEETKDDIKLLRIQIEDDLRNGISGAVPVPPDEAGKEEVINSLVANVESMIKADRKITPLKQLQGHIWRTGFEKKELQGVVFEDVPVALKNWHSSGIKVYIYSSGSREAQRLLFGNTTYGDLRKFLCGYFDTTTGNKRETRSYFEVSQSLGVDSPSQILFITDVFQEAVAAKNTGFEVIISIRPGNAPLPDNHGFRTIKSFSEI.

A methylthioribulose-1-phosphate dehydratase region spans residues 1 to 242 (MACGGCSCEA…CIKLYQLGID (242 aa)). Cysteine 114 lines the substrate pocket. Positions 132 and 134 each coordinate Zn(2+). Catalysis depends on glutamate 157, which acts as the Proton donor/acceptor; for methylthioribulose-1-phosphate dehydratase activity. Residue histidine 207 participates in Zn(2+) binding. An enolase-phosphatase E1 region spans residues 278–517 (VVLDIEGTTT…FRTIKSFSEI (240 aa)). 2 residues coordinate Mg(2+): aspartate 281 and glutamate 283. Residues 416–417 (SS) and lysine 450 contribute to the substrate site. Aspartate 476 provides a ligand contact to Mg(2+).

It in the N-terminal section; belongs to the aldolase class II family. MtnB subfamily. In the C-terminal section; belongs to the HAD-like hydrolase superfamily. MasA/MtnC family. Zn(2+) serves as cofactor. It depends on Mg(2+) as a cofactor.

It carries out the reaction 5-(methylsulfanyl)-D-ribulose 1-phosphate = 5-methylsulfanyl-2,3-dioxopentyl phosphate + H2O. The catalysed reaction is 5-methylsulfanyl-2,3-dioxopentyl phosphate + H2O = 1,2-dihydroxy-5-(methylsulfanyl)pent-1-en-3-one + phosphate. The protein operates within amino-acid biosynthesis; L-methionine biosynthesis via salvage pathway; L-methionine from S-methyl-5-thio-alpha-D-ribose 1-phosphate: step 2/6. It participates in amino-acid biosynthesis; L-methionine biosynthesis via salvage pathway; L-methionine from S-methyl-5-thio-alpha-D-ribose 1-phosphate: step 3/6. Its pathway is amino-acid biosynthesis; L-methionine biosynthesis via salvage pathway; L-methionine from S-methyl-5-thio-alpha-D-ribose 1-phosphate: step 4/6. The chain is Probable bifunctional methylthioribulose-1-phosphate dehydratase/enolase-phosphatase E1 from Sorghum bicolor (Sorghum).